The chain runs to 231 residues: MTTPNFELYGYFRSSCSGRLRIAFHLKSIPYTRHPVNLLKGEQHSDTYKSLNPTNTVPLLVVSNINNTVSPSSASFSIGQSLAALEYLEEALPTNARPLLPPISNPVARAHVRTICNIIACDVQPVTNLKIQKKVKALDGDPTVWSRDLATQGFGAVEKLLELSAGRFCVGDEITLADVCLVPAVWAAERVGMDLARFPITKRVFEEMLKEEAVQKAHWQKQEDTPEDLRA.

The region spanning 4–96 (PNFELYGYFR…YLEEALPTNA (93 aa)) is the GST N-terminal domain. Residues S14, Q43, V57, 80–81 (QS), Q124, and 128–130 (NLK) each bind glutathione. The 123-residue stretch at 105–227 (NPVARAHVRT…HWQKQEDTPE (123 aa)) folds into the GST C-terminal domain.

It belongs to the GST superfamily. Zeta family. In terms of assembly, homodimer.

It carries out the reaction RX + glutathione = an S-substituted glutathione + a halide anion + H(+). In terms of biological role, probable glutathione S-transferase. This chain is Probable glutathione S-transferase, found in Coccidioides immitis (strain RS) (Valley fever fungus).